Reading from the N-terminus, the 330-residue chain is D-lactate dehydrogenase (330 aa).

NAD(+)-binding positions include 156–157 (RI), D176, 206–207 (VP), 233–235 (AAR), and D259. The active site involves R235. Residue E264 is part of the active site. The active-site Proton donor is H296.

Belongs to the D-isomer specific 2-hydroxyacid dehydrogenase family.

It catalyses the reaction (R)-lactate + NAD(+) = pyruvate + NADH + H(+). This Staphylococcus aureus (strain MSSA476) protein is D-lactate dehydrogenase (ldhD).